A 449-amino-acid chain; its full sequence is Tubulin beta-4 chain (449 aa).

The short motif at 1-4 is the MREI motif element; sequence MREI. GTP contacts are provided by glutamine 11, glutamate 69, serine 138, glycine 142, threonine 143, glycine 144, asparagine 204, and asparagine 226. Glutamate 69 provides a ligand contact to Mg(2+). Positions 421-449 are disordered; it reads EYQQYQDATAEEEGEMYEDDEEESEQGAK. The span at 429–449 shows a compositional bias: acidic residues; it reads TAEEEGEMYEDDEEESEQGAK. Glutamate 438 bears the 5-glutamyl polyglutamate mark. Serine 444 carries the phosphoserine modification.

The protein belongs to the tubulin family. As to quaternary structure, dimer of alpha and beta chains. A typical microtubule is a hollow water-filled tube with an outer diameter of 25 nm and an inner diameter of 15 nM. Alpha-beta heterodimers associate head-to-tail to form protofilaments running lengthwise along the microtubule wall with the beta-tubulin subunit facing the microtubule plus end conferring a structural polarity. Microtubules usually have 13 protofilaments but different protofilament numbers can be found in some organisms and specialized cells. It depends on Mg(2+) as a cofactor. Post-translationally, some glutamate residues at the C-terminus are polyglycylated, resulting in polyglycine chains on the gamma-carboxyl group. Glycylation is mainly limited to tubulin incorporated into axonemes (cilia and flagella) whereas glutamylation is prevalent in neuronal cells, centrioles, axonemes, and the mitotic spindle. Both modifications can coexist on the same protein on adjacent residues, and lowering polyglycylation levels increases polyglutamylation, and reciprocally. The precise function of polyglycylation is still unclear. In terms of processing, some glutamate residues at the C-terminus are polyglutamylated, resulting in polyglutamate chains on the gamma-carboxyl group. Polyglutamylation plays a key role in microtubule severing by spastin (SPAST). SPAST preferentially recognizes and acts on microtubules decorated with short polyglutamate tails: severing activity by SPAST increases as the number of glutamates per tubulin rises from one to eight, but decreases beyond this glutamylation threshold. As to expression, neuron specific.

Its subcellular location is the cytoplasm. The protein resides in the cytoskeleton. Functionally, tubulin is the major constituent of microtubules, a cylinder consisting of laterally associated linear protofilaments composed of alpha- and beta-tubulin heterodimers. Microtubules grow by the addition of GTP-tubulin dimers to the microtubule end, where a stabilizing cap forms. Below the cap, tubulin dimers are in GDP-bound state, owing to GTPase activity of alpha-tubulin. The polypeptide is Tubulin beta-4 chain (Gallus gallus (Chicken)).